Reading from the N-terminus, the 477-residue chain is Calcium/calmodulin-dependent protein kinase type 1G (477 aa).

The Protein kinase domain occupies 23-277 (FIFMEVLGSG…CEKALRHPWI (255 aa)). Residues 29-37 (LGSGAFSEV) and lysine 52 each bind ATP. Aspartate 143 acts as the Proton acceptor in catalysis. The interval 277–317 (IDGNTALHRDIYPSVSLQIQKNFAKSKWRQAFNAAAVVHHM) is autoinhibitory domain. Residues 297 to 318 (KNFAKSKWRQAFNAAAVVHHMR) form a calmodulin-binding region. The interval 326–388 (SPSVRQEVEN…SRPSAPSGGR (63 aa)) is disordered. Residues 376-388 (SHSSRPSAPSGGR) show a composition bias toward low complexity.

Belongs to the protein kinase superfamily. CAMK Ser/Thr protein kinase family. CaMK subfamily. Post-translationally, may be prenylated on Cys-474. As to expression, highly expressed in brain, in neuronal cell bodies of the central nucleus of amygdala and ventromedial hypothalamic nucleus. Also detected in heart, testis, and kidney.

Its subcellular location is the cytoplasm. The protein localises to the golgi apparatus membrane. The protein resides in the cell membrane. The catalysed reaction is L-seryl-[protein] + ATP = O-phospho-L-seryl-[protein] + ADP + H(+). It carries out the reaction L-threonyl-[protein] + ATP = O-phospho-L-threonyl-[protein] + ADP + H(+). Its activity is regulated as follows. Activated by Ca(2+)/calmodulin. Binding of calmodulin is thought to result in a conformational change and leads to activation through phosphorylation by CAMKK1. Its function is as follows. Calcium/calmodulin-dependent protein kinase belonging to a proposed calcium-triggered signaling cascade. In vitro phosphorylates transcription factor CREB1. This is Calcium/calmodulin-dependent protein kinase type 1G (Camk1g) from Mus musculus (Mouse).